The sequence spans 254 residues: Ribosomal RNA small subunit methyltransferase G (254 aa).

Residues Gly-92, 143-144 (AE), and Arg-156 each bind S-adenosyl-L-methionine.

It belongs to the methyltransferase superfamily. RNA methyltransferase RsmG family.

The protein resides in the cytoplasm. Specifically methylates the N7 position of a guanine in 16S rRNA. The protein is Ribosomal RNA small subunit methyltransferase G of Leptospira interrogans serogroup Icterohaemorrhagiae serovar copenhageni (strain Fiocruz L1-130).